Reading from the N-terminus, the 89-residue chain is Dynein light chain LC6, flagellar outer arm (89 aa).

Belongs to the dynein light chain family. In terms of assembly, consists of at least 3 heavy chains (alpha, beta and gamma), 2 intermediate chains and 8 light chains.

The protein localises to the cytoplasm. It localises to the cytoskeleton. Its subcellular location is the flagellum axoneme. The protein is Dynein light chain LC6, flagellar outer arm of Heliocidaris crassispina (Sea urchin).